The sequence spans 429 residues: Adenylosuccinate synthetase (429 aa).

GTP contacts are provided by residues 12–18 and 40–42; these read GDEGKGK and GHT. Catalysis depends on aspartate 13, which acts as the Proton acceptor. Mg(2+) is bound by residues aspartate 13 and glycine 40. IMP contacts are provided by residues 13–16, 38–41, threonine 129, arginine 143, glutamine 224, threonine 239, and arginine 303; these read DEGK and NAGH. The active-site Proton donor is the histidine 41. Residue 299–305 participates in substrate binding; sequence VTTGRAR. GTP contacts are provided by residues arginine 305, 331-333, and 413-415; these read KLD and GVG.

The protein belongs to the adenylosuccinate synthetase family. As to quaternary structure, homodimer. Mg(2+) is required as a cofactor.

The protein resides in the cytoplasm. The enzyme catalyses IMP + L-aspartate + GTP = N(6)-(1,2-dicarboxyethyl)-AMP + GDP + phosphate + 2 H(+). The protein operates within purine metabolism; AMP biosynthesis via de novo pathway; AMP from IMP: step 1/2. Functionally, plays an important role in the de novo pathway of purine nucleotide biosynthesis. Catalyzes the first committed step in the biosynthesis of AMP from IMP. The protein is Adenylosuccinate synthetase of Rhodococcus jostii (strain RHA1).